A 446-amino-acid chain; its full sequence is Probable D-serine dehydratase (446 aa).

An N6-(pyridoxal phosphate)lysine modification is found at lysine 116.

Belongs to the serine/threonine dehydratase family. DsdA subfamily. Pyridoxal 5'-phosphate serves as cofactor.

It catalyses the reaction D-serine = pyruvate + NH4(+). The sequence is that of Probable D-serine dehydratase from Bacillus cereus (strain ZK / E33L).